A 488-amino-acid chain; its full sequence is Bifunctional protein HldE (488 aa).

Residues 1-330 are ribokinase; sequence MDRKSIESIF…NAVALAHSDS (330 aa). 205–208 lines the ATP pocket; the sequence is NRRE. The active site involves aspartate 275. The interval 356 to 488 is cytidylyltransferase; it reads FTNGCFDLLH…IIERVLERYS (133 aa).

The protein in the N-terminal section; belongs to the carbohydrate kinase PfkB family. This sequence in the C-terminal section; belongs to the cytidylyltransferase family. In terms of assembly, homodimer.

It catalyses the reaction D-glycero-beta-D-manno-heptose 7-phosphate + ATP = D-glycero-beta-D-manno-heptose 1,7-bisphosphate + ADP + H(+). The catalysed reaction is D-glycero-beta-D-manno-heptose 1-phosphate + ATP + H(+) = ADP-D-glycero-beta-D-manno-heptose + diphosphate. The protein operates within nucleotide-sugar biosynthesis; ADP-L-glycero-beta-D-manno-heptose biosynthesis; ADP-L-glycero-beta-D-manno-heptose from D-glycero-beta-D-manno-heptose 7-phosphate: step 1/4. Its pathway is nucleotide-sugar biosynthesis; ADP-L-glycero-beta-D-manno-heptose biosynthesis; ADP-L-glycero-beta-D-manno-heptose from D-glycero-beta-D-manno-heptose 7-phosphate: step 3/4. Its function is as follows. Catalyzes the phosphorylation of D-glycero-D-manno-heptose 7-phosphate at the C-1 position to selectively form D-glycero-beta-D-manno-heptose-1,7-bisphosphate. Functionally, catalyzes the ADP transfer from ATP to D-glycero-beta-D-manno-heptose 1-phosphate, yielding ADP-D-glycero-beta-D-manno-heptose. This is Bifunctional protein HldE from Pelobacter propionicus (strain DSM 2379 / NBRC 103807 / OttBd1).